Here is a 75-residue protein sequence, read N- to C-terminus: Small ribosomal subunit protein bS18 (75 aa).

This sequence belongs to the bacterial ribosomal protein bS18 family. In terms of assembly, part of the 30S ribosomal subunit. Forms a tight heterodimer with protein bS6.

Functionally, binds as a heterodimer with protein bS6 to the central domain of the 16S rRNA, where it helps stabilize the platform of the 30S subunit. This Pseudoalteromonas translucida (strain TAC 125) protein is Small ribosomal subunit protein bS18.